Consider the following 202-residue polypeptide: Putative 3-methyladenine DNA glycosylase (202 aa).

The protein belongs to the DNA glycosylase MPG family.

This is Putative 3-methyladenine DNA glycosylase from Clostridioides difficile (strain 630) (Peptoclostridium difficile).